A 469-amino-acid chain; its full sequence is 3-isopropylmalate dehydratase large subunit (469 aa).

Residues C349, C410, and C413 each coordinate [4Fe-4S] cluster.

It belongs to the aconitase/IPM isomerase family. LeuC type 1 subfamily. As to quaternary structure, heterodimer of LeuC and LeuD. It depends on [4Fe-4S] cluster as a cofactor.

It carries out the reaction (2R,3S)-3-isopropylmalate = (2S)-2-isopropylmalate. It participates in amino-acid biosynthesis; L-leucine biosynthesis; L-leucine from 3-methyl-2-oxobutanoate: step 2/4. In terms of biological role, catalyzes the isomerization between 2-isopropylmalate and 3-isopropylmalate, via the formation of 2-isopropylmaleate. This chain is 3-isopropylmalate dehydratase large subunit, found in Neisseria gonorrhoeae (strain NCCP11945).